Reading from the N-terminus, the 385-residue chain is POU domain, class 3, transcription factor 2-B (385 aa).

3 disordered regions span residues 106 to 136, 149 to 209, and 351 to 385; these read LVHPAHGNHHGPGAWRSTGSTHLSSMASSNG, NGMI…TPTS, and EKRMTPPGGTIPGAEDVYGASRDTPPHLGVQTSVQ. Positions 122–136 are enriched in polar residues; that stretch reads STGSTHLSSMASSNG. Residues 165–178 are compositionally biased toward basic and acidic residues; the sequence is LRDSHDDHHGDHGH. The span at 179 to 196 shows a compositional bias: low complexity; the sequence is QQPSQTQQQQQQHSQLQG. A POU-specific domain is found at 204 to 278; that stretch reads EDTPTSDDLE…LLNKWLEEAD (75 aa). Positions 296–355 form a DNA-binding region, homeobox; the sequence is KRKKRTSIEVSVKGALESHFLKCPKPAAQEITSLADSLQLEKEVVRVWFCNRRQKEKRMT.

This sequence belongs to the POU transcription factor family. Class-3 subfamily. In terms of tissue distribution, expressed in the developing brain and spinal cord. Also found in a restricted region of the auditory vesicle during development. In the adult, expression is restricted to the brain.

The protein resides in the nucleus. In terms of biological role, transcription factor that may be implicated in patterning of the central nervous system during early development. The sequence is that of POU domain, class 3, transcription factor 2-B (pou3f2-b) from Xenopus laevis (African clawed frog).